A 175-amino-acid chain; its full sequence is ATP-dependent protease subunit HslV (175 aa).

Thr-5 is a catalytic residue. The Na(+) site is built by Gly-160, Asp-163, and Thr-166.

It belongs to the peptidase T1B family. HslV subfamily. In terms of assembly, a double ring-shaped homohexamer of HslV is capped on each side by a ring-shaped HslU homohexamer. The assembly of the HslU/HslV complex is dependent on binding of ATP.

It localises to the cytoplasm. The enzyme catalyses ATP-dependent cleavage of peptide bonds with broad specificity.. Its activity is regulated as follows. Allosterically activated by HslU binding. Its function is as follows. Protease subunit of a proteasome-like degradation complex believed to be a general protein degrading machinery. In Myxococcus xanthus, this protein is ATP-dependent protease subunit HslV.